The following is a 365-amino-acid chain: Peptide chain release factor 2 (365 aa).

Gln252 bears the N5-methylglutamine mark.

This sequence belongs to the prokaryotic/mitochondrial release factor family. Post-translationally, methylated by PrmC. Methylation increases the termination efficiency of RF2.

It is found in the cytoplasm. Its function is as follows. Peptide chain release factor 2 directs the termination of translation in response to the peptide chain termination codons UGA and UAA. The sequence is that of Peptide chain release factor 2 from Escherichia coli O8 (strain IAI1).